The chain runs to 332 residues: Fructose-1,6-bisphosphatase class 1 (332 aa).

Glu-89, Asp-110, Leu-112, and Asp-113 together coordinate Mg(2+). Residues 113–116, Asn-206, Tyr-239, 257–259, and Lys-269 contribute to the substrate site; these read DGSS and YLY. Residue Glu-275 participates in Mg(2+) binding.

It belongs to the FBPase class 1 family. In terms of assembly, homotetramer. The cofactor is Mg(2+).

It localises to the cytoplasm. It catalyses the reaction beta-D-fructose 1,6-bisphosphate + H2O = beta-D-fructose 6-phosphate + phosphate. Its pathway is carbohydrate biosynthesis; gluconeogenesis. In Escherichia coli (strain ATCC 8739 / DSM 1576 / NBRC 3972 / NCIMB 8545 / WDCM 00012 / Crooks), this protein is Fructose-1,6-bisphosphatase class 1.